A 781-amino-acid polypeptide reads, in one-letter code: Penicillin-binding protein 1B (781 aa).

The tract at residues 151–322 (FRLAPKLIAM…SLYNPWRNPQ (172 aa)) is transglycosylase. E188 (proton donor; for transglycosylase activity) is an active-site residue. The transpeptidase stretch occupies residues 415 to 702 (SQLQLKMKNP…ALQIYKDYLN (288 aa)). Catalysis depends on S466, which acts as the Acyl-ester intermediate; for transpeptidase activity. Residues 749-768 (ETSSPSLTPTTETETPPQES) are compositionally biased toward low complexity. The disordered stretch occupies residues 749–781 (ETSSPSLTPTTETETPPQESLWDVLDNPNPPAQ).

This sequence in the N-terminal section; belongs to the glycosyltransferase 51 family. The protein in the C-terminal section; belongs to the transpeptidase family.

It is found in the cell inner membrane. It catalyses the reaction [GlcNAc-(1-&gt;4)-Mur2Ac(oyl-L-Ala-gamma-D-Glu-L-Lys-D-Ala-D-Ala)](n)-di-trans,octa-cis-undecaprenyl diphosphate + beta-D-GlcNAc-(1-&gt;4)-Mur2Ac(oyl-L-Ala-gamma-D-Glu-L-Lys-D-Ala-D-Ala)-di-trans,octa-cis-undecaprenyl diphosphate = [GlcNAc-(1-&gt;4)-Mur2Ac(oyl-L-Ala-gamma-D-Glu-L-Lys-D-Ala-D-Ala)](n+1)-di-trans,octa-cis-undecaprenyl diphosphate + di-trans,octa-cis-undecaprenyl diphosphate + H(+). The catalysed reaction is Preferential cleavage: (Ac)2-L-Lys-D-Ala-|-D-Ala. Also transpeptidation of peptidyl-alanyl moieties that are N-acyl substituents of D-alanine.. Its pathway is cell wall biogenesis; peptidoglycan biosynthesis. Functionally, cell wall formation. Synthesis of cross-linked peptidoglycan from the lipid intermediates. The enzyme has a penicillin-insensitive transglycosylase N-terminal domain (formation of linear glycan strands) and a penicillin-sensitive transpeptidase C-terminal domain (cross-linking of the peptide subunits). The protein is Penicillin-binding protein 1B (mrcB) of Haemophilus influenzae (strain ATCC 51907 / DSM 11121 / KW20 / Rd).